We begin with the raw amino-acid sequence, 114 residues long: Probable prefoldin subunit 2 (114 aa).

The protein belongs to the prefoldin subunit beta family. As to quaternary structure, heterohexamer of two PFD-alpha type and four PFD-beta type subunits.

Functionally, binds specifically to cytosolic chaperonin (c-CPN) and transfers target proteins to it. Binds to nascent polypeptide chain and promotes folding in an environment in which there are many competing pathways for nonnative proteins. The protein is Probable prefoldin subunit 2 of Schizosaccharomyces pombe (strain 972 / ATCC 24843) (Fission yeast).